The sequence spans 70 residues: ATP synthase subunit epsilon, mitochondrial (70 aa).

This sequence belongs to the eukaryotic ATPase epsilon family. As to quaternary structure, F-type ATPases have 2 components, CF(1) - the catalytic core - and CF(0) - the membrane proton channel. CF(1) has five subunits: alpha(3), beta(3), gamma(1), delta(1), epsilon(1). CF(0) has three main subunits: a, b and c.

It localises to the mitochondrion. Its subcellular location is the mitochondrion inner membrane. In terms of biological role, mitochondrial membrane ATP synthase (F(1)F(0) ATP synthase or Complex V) produces ATP from ADP in the presence of a proton gradient across the membrane which is generated by electron transport complexes of the respiratory chain. F-type ATPases consist of two structural domains, F(1) - containing the extramembraneous catalytic core, and F(0) - containing the membrane proton channel, linked together by a central stalk and a peripheral stalk. During catalysis, ATP synthesis in the catalytic domain of F(1) is coupled via a rotary mechanism of the central stalk subunits to proton translocation. Part of the complex F(1) domain and of the central stalk which is part of the complex rotary element. Rotation of the central stalk against the surrounding alpha(3)beta(3) subunits leads to hydrolysis of ATP in three separate catalytic sites on the beta subunits. This chain is ATP synthase subunit epsilon, mitochondrial, found in Zea mays (Maize).